The sequence spans 214 residues: Pyridoxine/pyridoxamine 5'-phosphate oxidase (214 aa).

Residues 7-10 (REEY) and lysine 65 contribute to the substrate site. FMN is bound by residues 60-65 (RTVLLK), 75-76 (FT), arginine 81, lysine 82, and glutamine 104. Residues tyrosine 122, arginine 126, and serine 130 each coordinate substrate. Residues 139–140 (QS) and tryptophan 184 each bind FMN. Position 190–192 (190–192 (RLH)) interacts with substrate. Arginine 194 contributes to the FMN binding site.

The protein belongs to the pyridoxamine 5'-phosphate oxidase family. Homodimer. It depends on FMN as a cofactor.

The catalysed reaction is pyridoxamine 5'-phosphate + O2 + H2O = pyridoxal 5'-phosphate + H2O2 + NH4(+). It carries out the reaction pyridoxine 5'-phosphate + O2 = pyridoxal 5'-phosphate + H2O2. Its pathway is cofactor metabolism; pyridoxal 5'-phosphate salvage; pyridoxal 5'-phosphate from pyridoxamine 5'-phosphate: step 1/1. It participates in cofactor metabolism; pyridoxal 5'-phosphate salvage; pyridoxal 5'-phosphate from pyridoxine 5'-phosphate: step 1/1. Catalyzes the oxidation of either pyridoxine 5'-phosphate (PNP) or pyridoxamine 5'-phosphate (PMP) into pyridoxal 5'-phosphate (PLP). This Crocosphaera subtropica (strain ATCC 51142 / BH68) (Cyanothece sp. (strain ATCC 51142)) protein is Pyridoxine/pyridoxamine 5'-phosphate oxidase.